We begin with the raw amino-acid sequence, 180 residues long: MGENEPIHIEYADETELLTEFRQYMADPDTREKAANYLLDSLVDEMILGVVFEVHHAYKTGSGAAIEGQPEDCKPYTIVDLPDMDVFGSSNSKKAIDCSCPNCNRIVAASRFAPHLEKCMGMGRNSSRIASRRIANTRDGGNYFGADEDDEDDADWSGEKRKKKIAPVRTNGSKKNGKTS.

An SGF11-type zinc finger spans residues cysteine 98–cysteine 119. Residues arginine 138–serine 180 form a disordered region. Over residues alanine 146–tryptophan 156 the composition is skewed to acidic residues.

This sequence belongs to the SGF11 family. In terms of assembly, component of some SAGA transcription coactivator-HAT complexes. Within the SAGA complex, participates in a subcomplex of SAGA called the DUB module (deubiquitination module).

Its subcellular location is the nucleus. Component of the transcription regulatory histone acetylation (HAT) complex SAGA, a multiprotein complex that activates transcription by remodeling chromatin and mediating histone acetylation and deubiquitination. Within the SAGA complex, participates in a subcomplex that specifically deubiquitinates histone H2B. The SAGA complex is recruited to specific gene promoters by activators, where it is required for transcription. The protein is SAGA-associated factor 11 homolog of Aedes aegypti (Yellowfever mosquito).